The sequence spans 335 residues: Nucleoid-associated protein YejK (335 aa).

It belongs to the YejK family.

The protein localises to the cytoplasm. The protein resides in the nucleoid. This chain is Nucleoid-associated protein YejK, found in Salmonella arizonae (strain ATCC BAA-731 / CDC346-86 / RSK2980).